A 117-amino-acid chain; its full sequence is Biogenesis of lysosome-related organelles complex 1 subunit BLS1 (117 aa).

A disordered region spans residues 97–117 (EGKAQDTEQAPGKGDRIFRSD).

Belongs to the BLOC1S1 family. In terms of assembly, component of the biogenesis of lysosome-related organelles complex-1 (BLOC-1).

The protein localises to the endosome. Functionally, component of the biogenesis of lysosome-related organelles complex-1 (BLOC-1), a complex involved in endosomal cargo sorting. In Eremothecium gossypii (strain ATCC 10895 / CBS 109.51 / FGSC 9923 / NRRL Y-1056) (Yeast), this protein is Biogenesis of lysosome-related organelles complex 1 subunit BLS1 (BLS1).